The following is a 94-amino-acid chain: MNKTELIDGVAAAANLSKVEAGRAIDAVVNEITEALKKGDSVTLVGFGTFQVRPRAERPGRNPKSGELIMIAASNNPSFKPGKALKDAVKCSAG.

It belongs to the bacterial histone-like protein family.

Histone-like DNA-binding protein which is capable of wrapping DNA to stabilize it, and thus to prevent its denaturation under extreme environmental conditions. The sequence is that of DNA-binding protein HU (hup) from Xylella fastidiosa (strain 9a5c).